Reading from the N-terminus, the 161-residue chain is Cyclic pyranopterin monophosphate synthase (161 aa).

Substrate-binding positions include 75–77 (LCH) and 113–114 (ME). The active site involves Asp128.

It belongs to the MoaC family. Homohexamer; trimer of dimers.

The catalysed reaction is (8S)-3',8-cyclo-7,8-dihydroguanosine 5'-triphosphate = cyclic pyranopterin phosphate + diphosphate. The protein operates within cofactor biosynthesis; molybdopterin biosynthesis. In terms of biological role, catalyzes the conversion of (8S)-3',8-cyclo-7,8-dihydroguanosine 5'-triphosphate to cyclic pyranopterin monophosphate (cPMP). In Thioalkalivibrio sulfidiphilus (strain HL-EbGR7), this protein is Cyclic pyranopterin monophosphate synthase.